Here is a 132-residue protein sequence, read N- to C-terminus: Small ribosomal subunit protein uS13 (132 aa).

Residues 101-125 are compositionally biased toward basic residues; sequence RGLPVRGQRTKTNARTRKGPRKTVA. The tract at residues 101-132 is disordered; the sequence is RGLPVRGQRTKTNARTRKGPRKTVANKKIETR.

It belongs to the universal ribosomal protein uS13 family. Part of the 30S ribosomal subunit. Forms a loose heterodimer with protein S19. Forms two bridges to the 50S subunit in the 70S ribosome.

In terms of biological role, located at the top of the head of the 30S subunit, it contacts several helices of the 16S rRNA. In the 70S ribosome it contacts the 23S rRNA (bridge B1a) and protein L5 of the 50S subunit (bridge B1b), connecting the 2 subunits; these bridges are implicated in subunit movement. Contacts the tRNAs in the A and P-sites. This chain is Small ribosomal subunit protein uS13, found in Ureaplasma urealyticum serovar 10 (strain ATCC 33699 / Western).